Reading from the N-terminus, the 257-residue chain is MVKSHIGSWLLVLFVATWSDIGFCKKRPKPGGGWNTGGSRYPGQGSPGGNRYPPQGGGGWGQPHGGGWGQPHGGGWGQPHGGGWGQPHGGGGWGQGGGSHGQWGKPSKPKTNMKHVAGAAAAGAVVGGLGGYMLGSAMSRPLIHFGNDYEDRYYRENMYRYPNQVYYKPVDQYSNQNNFVHDCVNITVKQHTVTTTTKGENFTETDMKIMERVVEQMCVTQYQRESEAYYQRGASAILFSPPPVILLISLLILLIVG.

The first 24 residues, 1 to 24, serve as a signal peptide directing secretion; sequence MVKSHIGSWLLVLFVATWSDIGFC. Residues 25 to 41 form an interaction with ADGRG6 region; the sequence is KKRPKPGGGWNTGGSRY. Positions 25 to 234 are interaction with GRB2, ERI3 and SYN1; sequence KKRPKPGGGW…ESEAYYQRGA (210 aa). A disordered region spans residues 27–114; sequence RPKPGGGWNT…KPSKPKTNMK (88 aa). Repeat copies occupy residues 54-62, 63-70, 71-78, 79-86, and 87-95. Positions 54 to 95 are 5 X 8 AA tandem repeats of P-H-G-G-G-W-G-Q; the sequence is PQGGGGWGQPHGGGWGQPHGGGWGQPHGGGWGQPHGGGGWGQ. A compositionally biased stretch (gly residues) spans 55-101; the sequence is QGGGGWGQPHGGGWGQPHGGGWGQPHGGGWGQPHGGGGWGQGGGSHG. Positions 64, 65, 66, 72, 73, 74, 80, 81, 82, 88, 90, and 91 each coordinate Cu(2+). Cysteine 183 and cysteine 218 are joined by a disulfide. Residues asparagine 185 and asparagine 201 are each glycosylated (N-linked (GlcNAc...) asparagine). Residue alanine 234 is the site of GPI-anchor amidated alanine attachment. Positions 235–257 are cleaved as a propeptide — removed in mature form; it reads SAILFSPPPVILLISLLILLIVG.

It belongs to the prion family. Monomer and homodimer. Has a tendency to aggregate into amyloid fibrils containing a cross-beta spine, formed by a steric zipper of superposed beta-strands. Soluble oligomers may represent an intermediate stage on the path to fibril formation. Copper binding may promote oligomerization. Interacts with GRB2, APP, ERI3/PRNPIP and SYN1. Mislocalized cytosolically exposed PrP interacts with MGRN1; this interaction alters MGRN1 subcellular location and causes lysosomal enlargement. Interacts with APP. Interacts with KIAA1191. Interacts with ADGRG6.

It is found in the cell membrane. The protein localises to the golgi apparatus. In terms of biological role, its primary physiological function is unclear. May play a role in neuronal development and synaptic plasticity. May be required for neuronal myelin sheath maintenance. May promote myelin homeostasis through acting as an agonist for ADGRG6 receptor. May play a role in iron uptake and iron homeostasis. Soluble oligomers are toxic to cultured neuroblastoma cells and induce apoptosis (in vitro). Association with GPC1 (via its heparan sulfate chains) targets PRNP to lipid rafts. Also provides Cu(2+) or Zn(2+) for the ascorbate-mediated GPC1 deaminase degradation of its heparan sulfate side chains. The protein is Major prion protein (PRNP) of Neovison vison (American mink).